A 1872-amino-acid polypeptide reads, in one-letter code: Fatty acid synthase beta subunit pkiC (1872 aa).

An acetyltransferase (AT) domain region spans residues 174–425; it reads VFGGQGECSR…DQSRIPFRDR (252 aa). The segment at 591–836 is enoyl reductase (ER) domain; the sequence is NRVLGAPPIM…IIAATPGVSD (246 aa). Residues 1111–1132 are disordered; sequence TTPASWSTLSLTERDTSEETSD. Residues 1158–1597 are dehydratase (DH) domain; sequence PSHPLWMRAL…MPLEKLVVEI (440 aa). Positions 1518–1617 constitute a MaoC-like domain; it reads PPSNEPYAQL…CFSILAKRKE (100 aa).

Belongs to the fungal fatty acid synthetase subunit beta family. As to quaternary structure, [Alpha(6)beta(6)] hexamers of two multifunctional subunits (alpha and beta).

It carries out the reaction acetyl-CoA + n malonyl-CoA + 2n NADPH + 4n H(+) = a long-chain-acyl-CoA + n CoA + n CO2 + 2n NADP(+).. The catalysed reaction is holo-[ACP] + acetyl-CoA = acetyl-[ACP] + CoA. The enzyme catalyses holo-[ACP] + malonyl-CoA = malonyl-[ACP] + CoA. It catalyses the reaction a (3R)-hydroxyacyl-[ACP] = a (2E)-enoyl-[ACP] + H2O. It carries out the reaction a 2,3-saturated acyl-[ACP] + NAD(+) = a (2E)-enoyl-[ACP] + NADH + H(+). The catalysed reaction is (9Z)-octadecenoyl-[ACP] + H2O = (9Z)-octadecenoate + holo-[ACP] + H(+). It participates in secondary metabolite biosynthesis. Functionally, fatty acid synthase beta subunit; part of the pki gene cluster that mediates the biosynthesis of 2,4-dihydroxy-3-methyl-6-(2-oxoundecyl)benzaldehyde. The first step in the pathway is the generation of the decanoyl starter unit by the FAS composed of subunits pkiB and pkiC, which is then transferred directly from the FAS to the SAT domain of the non-reducing polyketide synthase pkiA. PkiA condenses the decanoyyl starter unit with 4 malonyl-CoA units and performs one methylation step to yield 2,4-dihydroxy-3-methyl-6-(2-oxoundecyl)benzaldehyde. This chain is Fatty acid synthase beta subunit pkiC, found in Emericella nidulans (strain FGSC A4 / ATCC 38163 / CBS 112.46 / NRRL 194 / M139) (Aspergillus nidulans).